The following is a 257-amino-acid chain: MGRVIRAQRKGAGSVFKAHVKHRKGAAKLRHIDFAERHGYIKGIVKDIIHDPGRGTPLAKVVFRDPYRFKKRTELFIAAEGIHTGQFVFCGKKAQLNIGNVLPVGVMPEGTIICCLEEKPGDRGKLARASGNYATVISHNPETKKSRVKLPSGAKKVISSTNRAVVGVVAGGGRIDKPILKAGRAYHKYKVKRNCWPRVRGVAMNPVEHPFGGGNHQHIGKPSTIRRDVPAGRKVGLIAARRTGRLRGTKTVQEKEN.

Residues 207-226 are disordered; it reads VEHPFGGGNHQHIGKPSTIR.

It belongs to the universal ribosomal protein uL2 family. Component of the large ribosomal subunit.

It is found in the cytoplasm. In terms of biological role, component of the large ribosomal subunit. The ribosome is a large ribonucleoprotein complex responsible for the synthesis of proteins in the cell. This chain is Large ribosomal subunit protein uL2 (rpl8), found in Ictalurus punctatus (Channel catfish).